The sequence spans 278 residues: MPDSNFGIVLQSLAKQCKVFWNNQIITAFPQKKLQWKNDFKLMVGDRVQLEDGAITKVLARKNELTRPRVANVDQIVLIQSLVQPKINWIQLLKLLVYFNAKLIDEIPILITKTDLDFDPMEKQKLIDLKQFNYQLFFVSKNEPLPSELIDIFSKKLSVFTGQSGVGKSSLINRLDPSLKQKIQALSVNKFGKNTTTKTTLFSFRGGFICDTPGFNVISIKNLKILAAQHFVGFQKMISKCHFSNCYHQYEKDCFVTTSVMKNRYPSWLYEKYRKMIN.

Residues K62–I218 enclose the CP-type G domain. Residues T112 to D115 and G162 to S170 contribute to the GTP site. The Zn(2+) site is built by C241, C246, H248, and C254.

The protein belongs to the TRAFAC class YlqF/YawG GTPase family. RsgA subfamily. In terms of assembly, monomer. Associates with 30S ribosomal subunit, binds 16S rRNA. The cofactor is Zn(2+).

The protein resides in the cytoplasm. Its function is as follows. One of several proteins that assist in the late maturation steps of the functional core of the 30S ribosomal subunit. Helps release RbfA from mature subunits. May play a role in the assembly of ribosomal proteins into the subunit. Circularly permuted GTPase that catalyzes slow GTP hydrolysis, GTPase activity is stimulated by the 30S ribosomal subunit. This Mycoplasma genitalium (strain ATCC 33530 / DSM 19775 / NCTC 10195 / G37) (Mycoplasmoides genitalium) protein is Small ribosomal subunit biogenesis GTPase RsgA.